We begin with the raw amino-acid sequence, 202 residues long: Small ribosomal subunit protein uS5 (202 aa).

Positions 1–13 are enriched in gly residues; sequence MPGQQRRGGGSGG. Positions 1–31 are disordered; sequence MPGQQRRGGGSGGSDRRERRDRSGGGPAQEK. Positions 14–23 are enriched in basic and acidic residues; sequence SDRRERRDRS. The S5 DRBM domain maps to 34–97; sequence YVERVVAINR…EEAKKHFFKV (64 aa).

This sequence belongs to the universal ribosomal protein uS5 family. As to quaternary structure, part of the 30S ribosomal subunit. Contacts proteins S4 and S8.

Its function is as follows. With S4 and S12 plays an important role in translational accuracy. Located at the back of the 30S subunit body where it stabilizes the conformation of the head with respect to the body. In Frankia alni (strain DSM 45986 / CECT 9034 / ACN14a), this protein is Small ribosomal subunit protein uS5.